Consider the following 761-residue polypeptide: Semaphorin-3D (761 aa).

The first 24 residues, 1 to 24 (MRASQVPNACSLLSLAMLFFPVTG), serve as a signal peptide directing secretion. The region spanning 32 to 519 (RLKLSYKDLL…SRDGLVQLSL (488 aa)) is the Sema domain. A disulfide bridge links Cys105 with Cys116. Asn127 is a glycosylation site (N-linked (GlcNAc...) asparagine). 4 disulfide bridges follow: Cys134–Cys143, Cys274–Cys386, Cys298–Cys346, and Cys522–Cys540. Residues 552 to 670 (PTSKRRARRQ…IHTIVKLNLN (119 aa)) form the Ig-like C2-type domain. N-linked (GlcNAc...) asparagine glycosylation is present at Asn595. A disulfide bond links Cys653 and Cys719. The span at 728–754 (RRQRNKGGAKWKHVQEMKKKRNRRHHE) shows a compositional bias: basic residues. Positions 728–761 (RRQRNKGGAKWKHVQEMKKKRNRRHHEPARPPST) are disordered.

The protein belongs to the semaphorin family. Developing spinal cord and developing visual system. Collapsin-1, -2, -3, and -5 bind to overlapping but distinct axon tracts.

Its subcellular location is the secreted. Functionally, induces the collapse and paralysis of neuronal growth cones. Could potentially act as repulsive cues toward specific neuronal populations. Binds to neuropilin. This Gallus gallus (Chicken) protein is Semaphorin-3D (SEMA3D).